The chain runs to 321 residues: Large ribosomal RNA subunit accumulation protein YCED homolog 1, chloroplastic (321 aa).

The transit peptide at 1–32 (MSLVCSLSCVAPLPQTKQSRPSFLKLETCTLS) directs the protein to the chloroplast.

This sequence belongs to the DUF177 domain family.

Its subcellular location is the plastid. It is found in the chloroplast stroma. The protein resides in the chloroplast nucleoid. In terms of biological role, plays a role in synthesis, processing and/or stability of 23S rRNA. Required for embryogenesis. This chain is Large ribosomal RNA subunit accumulation protein YCED homolog 1, chloroplastic, found in Arabidopsis thaliana (Mouse-ear cress).